A 130-amino-acid chain; its full sequence is uncharacterized protein (130 aa).

The segment at 1-104 (MRPGSSPRAP…RGRWGLRGGP (104 aa)) is disordered. The segment covering 88-97 (RRQPGPQRGR) has biased composition (low complexity).

This is an uncharacterized protein from Homo sapiens (Human).